Reading from the N-terminus, the 607-residue chain is DNA mismatch repair protein MutL (607 aa).

The interval 374–411 (RTEAGNEHVPSANRIQPPDPSIDMPDEPVPEQTDEPVA) is disordered. The span at 397-407 (MPDEPVPEQTD) shows a compositional bias: acidic residues.

The protein belongs to the DNA mismatch repair MutL/HexB family.

In terms of biological role, this protein is involved in the repair of mismatches in DNA. It is required for dam-dependent methyl-directed DNA mismatch repair. May act as a 'molecular matchmaker', a protein that promotes the formation of a stable complex between two or more DNA-binding proteins in an ATP-dependent manner without itself being part of a final effector complex. The chain is DNA mismatch repair protein MutL from Exiguobacterium sibiricum (strain DSM 17290 / CCUG 55495 / CIP 109462 / JCM 13490 / 255-15).